The sequence spans 400 residues: Homoserine O-acetyltransferase (400 aa).

Residues 64–373 enclose the AB hydrolase-1 domain; sequence NAILICHALT…TDRGHDAFLL (310 aa). S169 (nucleophile) is an active-site residue. R239 contributes to the substrate binding site. Residues D335 and H368 contribute to the active site. D369 is a binding site for substrate.

This sequence belongs to the AB hydrolase superfamily. MetX family. In terms of assembly, homodimer.

Its subcellular location is the cytoplasm. The catalysed reaction is L-homoserine + acetyl-CoA = O-acetyl-L-homoserine + CoA. It functions in the pathway amino-acid biosynthesis; L-methionine biosynthesis via de novo pathway; O-acetyl-L-homoserine from L-homoserine: step 1/1. In terms of biological role, transfers an acetyl group from acetyl-CoA to L-homoserine, forming acetyl-L-homoserine. In Bradyrhizobium diazoefficiens (strain JCM 10833 / BCRC 13528 / IAM 13628 / NBRC 14792 / USDA 110), this protein is Homoserine O-acetyltransferase.